The sequence spans 177 residues: Large ribosomal subunit protein uL6 (177 aa).

The interval 155–177 is disordered; the sequence is EPYKGKGVKHADERIFRKEGKKK.

This sequence belongs to the universal ribosomal protein uL6 family. In terms of assembly, part of the 50S ribosomal subunit.

This protein binds to the 23S rRNA, and is important in its secondary structure. It is located near the subunit interface in the base of the L7/L12 stalk, and near the tRNA binding site of the peptidyltransferase center. This chain is Large ribosomal subunit protein uL6, found in Bartonella tribocorum (strain CIP 105476 / IBS 506).